We begin with the raw amino-acid sequence, 831 residues long: MutS protein homolog 5 (831 aa).

The interval 1 to 43 (MAFRATPGRTPPGPGPGVPSASFSSPQPAMAAPGGIEEEDEEE) is disordered. 589–596 (GPNSSGKS) lines the ATP pocket.

This sequence belongs to the DNA mismatch repair MutS family. As to quaternary structure, heterooligomer of MSH4 and MSH5. Interacts with HJURP. Interacts with C7h12orf40/REDIC1.

Functionally, involved in DNA mismatch repair and meiotic recombination processes. Facilitates crossovers between homologs during meiosis. The polypeptide is MutS protein homolog 5 (Msh5) (Rattus norvegicus (Rat)).